The chain runs to 129 residues: Glycine cleavage system H protein (129 aa).

The 83-residue stretch at 24–106 (LLKIGVSEFA…IGEGWLVILK (83 aa)) folds into the Lipoyl-binding domain. The residue at position 65 (Lys-65) is an N6-lipoyllysine.

It belongs to the GcvH family. The glycine cleavage system is composed of four proteins: P, T, L and H. Requires (R)-lipoate as cofactor.

In terms of biological role, the glycine cleavage system catalyzes the degradation of glycine. The H protein shuttles the methylamine group of glycine from the P protein to the T protein. The polypeptide is Glycine cleavage system H protein (Prochlorococcus marinus (strain MIT 9312)).